The chain runs to 319 residues: GTP 3',8-cyclase (319 aa).

A Radical SAM core domain is found at 4–227; sequence KHGRKINYLR…VETEKSSTAL (224 aa). R13 is a binding site for GTP. 2 residues coordinate [4Fe-4S] cluster: C20 and C24. S-adenosyl-L-methionine is bound at residue Y26. Residue C27 coordinates [4Fe-4S] cluster. R63 contacts GTP. G67 serves as a coordination point for S-adenosyl-L-methionine. GTP is bound at residue T94. S118 contacts S-adenosyl-L-methionine. Residue K155 coordinates GTP. Residue M189 participates in S-adenosyl-L-methionine binding. 2 residues coordinate [4Fe-4S] cluster: C249 and C252. Residue 254–256 participates in GTP binding; it reads RVR. C266 is a [4Fe-4S] cluster binding site.

It belongs to the radical SAM superfamily. MoaA family. Monomer and homodimer. The cofactor is [4Fe-4S] cluster.

The enzyme catalyses GTP + AH2 + S-adenosyl-L-methionine = (8S)-3',8-cyclo-7,8-dihydroguanosine 5'-triphosphate + 5'-deoxyadenosine + L-methionine + A + H(+). It participates in cofactor biosynthesis; molybdopterin biosynthesis. Functionally, catalyzes the cyclization of GTP to (8S)-3',8-cyclo-7,8-dihydroguanosine 5'-triphosphate. The protein is GTP 3',8-cyclase of Clostridium botulinum (strain ATCC 19397 / Type A).